The sequence spans 61 residues: Arabinogalactan protein 15 (61 aa).

A signal peptide spans 1 to 22 (MAISKASIVVLMMVIISVVASA). Glutamine 23 bears the Pyrrolidone carboxylic acid mark. Proline 27, proline 29, and proline 31 each carry 4-hydroxyproline. 3 O-linked (Ara...) hydroxyproline glycosylation sites follow: proline 27, proline 29, and proline 31. Serine 35 carries the GPI-anchor amidated serine lipid modification. A propeptide spans 36-61 (SAISASFVSAGVAAVAALVFGSALRI) (removed in mature form).

This sequence belongs to the AG-peptide AGP family. Post-translationally, contains 4-hydroxyproline; hydroxylated on Pro-27, Pro-29 and Pro-31. O-glycosylated on hydroxyprolines; noncontiguous hydroxylproline residues are glycosylated with arabinogalactan. As to expression, expressed in reproductive tissues. Expressed in chalaza, funiculus, stigma, septum, style, integument and transmitting tract.

Its subcellular location is the cell membrane. In terms of biological role, proteoglycan that seems to be implicated in diverse developmental roles such as differentiation, cell-cell recognition, embryogenesis and programmed cell death. This chain is Arabinogalactan protein 15, found in Arabidopsis thaliana (Mouse-ear cress).